We begin with the raw amino-acid sequence, 263 residues long: Methylesterase 18 (263 aa).

Catalysis depends on serine 80, which acts as the Acyl-ester intermediate. Residues aspartate 212 and histidine 240 each act as charge relay system in the active site.

It belongs to the AB hydrolase superfamily. Methylesterase family.

It catalyses the reaction methyl (indol-3-yl)acetate + H2O = (indol-3-yl)acetate + methanol + H(+). The protein operates within plant hormone biosynthesis. Its function is as follows. Methylesterase shown to have methyl indole-3-acetic acid (MeIAA) esterase activity in vitro. This Arabidopsis thaliana (Mouse-ear cress) protein is Methylesterase 18.